The sequence spans 179 residues: uncharacterized protein (179 aa).

4 helical membrane passes run 33 to 53 (HIIALASKIAFTLALLYVILD), 63 to 83 (VMFIALFLGFVSYLSGDMLVL), 89 to 109 (ITASLADFGLSFVILWVFVLT), and 115 to 135 (FSPFGAALLSAACLTVFEYFF).

It is found in the cell membrane. This is an uncharacterized protein from Bacillus subtilis (strain 168).